We begin with the raw amino-acid sequence, 481 residues long: Glutamyl-tRNA(Gln) amidotransferase subunit A (481 aa).

Active-site charge relay system residues include Lys-76 and Ser-151. Residue Ser-175 is the Acyl-ester intermediate of the active site.

The protein belongs to the amidase family. GatA subfamily. In terms of assembly, heterotrimer of A, B and C subunits.

The catalysed reaction is L-glutamyl-tRNA(Gln) + L-glutamine + ATP + H2O = L-glutaminyl-tRNA(Gln) + L-glutamate + ADP + phosphate + H(+). Functionally, allows the formation of correctly charged Gln-tRNA(Gln) through the transamidation of misacylated Glu-tRNA(Gln) in organisms which lack glutaminyl-tRNA synthetase. The reaction takes place in the presence of glutamine and ATP through an activated gamma-phospho-Glu-tRNA(Gln). The sequence is that of Glutamyl-tRNA(Gln) amidotransferase subunit A from Chlorobaculum tepidum (strain ATCC 49652 / DSM 12025 / NBRC 103806 / TLS) (Chlorobium tepidum).